A 211-amino-acid polypeptide reads, in one-letter code: Urease accessory protein UreE (211 aa).

A disordered region spans residues 134-211; it reads FDPEGGAYAP…DHHGHGHEHK (78 aa). Basic and acidic residues predominate over residues 147 to 202; it reads PSHDHAGHDHAHDSHAHHDHDHGKHAQHDHGKHDHAHHDHAAHDDHHVHDEHCGHD.

The protein belongs to the UreE family.

It is found in the cytoplasm. Its function is as follows. Involved in urease metallocenter assembly. Binds nickel. Probably functions as a nickel donor during metallocenter assembly. This chain is Urease accessory protein UreE, found in Rhodopseudomonas palustris (strain BisB18).